The sequence spans 93 residues: Large ribosomal subunit protein bL27 (93 aa).

Residues 1–10 (MRFLLGLQYF) constitute a propeptide that is removed on maturation. The interval 14-36 (KGVGSTKNGRDSESKRLGAKKSD) is disordered. Over residues 21-36 (NGRDSESKRLGAKKSD) the composition is skewed to basic and acidic residues.

This sequence belongs to the bacterial ribosomal protein bL27 family. The N-terminus is cleaved by ribosomal processing cysteine protease Prp.

The chain is Large ribosomal subunit protein bL27 from Mycoplasma capricolum subsp. capricolum (strain California kid / ATCC 27343 / NCTC 10154).